The sequence spans 229 residues: Translin (229 aa).

A DNA/RNA binding region spans residues 86-90; that stretch reads RFHEH. A leucine-zipper region spans residues 177-198; the sequence is LDSGFRLLNLKNDSLRKRYDGL.

It belongs to the translin family. As to quaternary structure, ring-shaped heterooctamer of six TSN and two TSNAX subunits, DNA/RNA binding occurs inside the ring.

Its subcellular location is the cytoplasm. The protein resides in the nucleus. Exhibits both single-stranded and double-stranded endoribonuclease activity. May act as an activator of RNA-induced silencing complex (RISC) by facilitating endonucleolytic cleavage of the siRNA passenger strand. Functionally, DNA-binding protein that specifically recognizes consensus sequences at the breakpoint junctions in chromosomal translocations, mostly involving immunoglobulin (Ig)/T-cell receptor gene segments. Seems to recognize single-stranded DNA ends generated by staggered breaks occurring at recombination hot spots. This chain is Translin (TSN), found in Gallus gallus (Chicken).